The sequence spans 347 residues: Nicotinate-nucleotide--dimethylbenzimidazole phosphoribosyltransferase (347 aa).

Glutamate 316 serves as the catalytic Proton acceptor.

The protein belongs to the CobT family.

It catalyses the reaction 5,6-dimethylbenzimidazole + nicotinate beta-D-ribonucleotide = alpha-ribazole 5'-phosphate + nicotinate + H(+). It functions in the pathway nucleoside biosynthesis; alpha-ribazole biosynthesis; alpha-ribazole from 5,6-dimethylbenzimidazole: step 1/2. Its function is as follows. Catalyzes the synthesis of alpha-ribazole-5'-phosphate from nicotinate mononucleotide (NAMN) and 5,6-dimethylbenzimidazole (DMB). The chain is Nicotinate-nucleotide--dimethylbenzimidazole phosphoribosyltransferase from Vibrio campbellii (strain ATCC BAA-1116).